The sequence spans 297 residues: Urease accessory protein UreD (297 aa).

Residues 1–41 (MPQAADIATAPQRPSAPGDVVAAGQPPRARGRAHVSSKRRD) are disordered.

The protein belongs to the UreD family. As to quaternary structure, ureD, UreF and UreG form a complex that acts as a GTP-hydrolysis-dependent molecular chaperone, activating the urease apoprotein by helping to assemble the nickel containing metallocenter of UreC. The UreE protein probably delivers the nickel.

The protein resides in the cytoplasm. Functionally, required for maturation of urease via the functional incorporation of the urease nickel metallocenter. In Ruegeria sp. (strain TM1040) (Silicibacter sp.), this protein is Urease accessory protein UreD.